A 460-amino-acid polypeptide reads, in one-letter code: Lipase member H-B (460 aa).

The first 26 residues, 1-26 (MLLSFYFNGLLLVGCLLSWGRSDTEG), serve as a signal peptide directing secretion. 2 N-linked (GlcNAc...) asparagine glycosylation sites follow: asparagine 67 and asparagine 75. Catalysis depends on serine 163, which acts as the Nucleophile. Asparagine 177 is a glycosylation site (N-linked (GlcNAc...) asparagine). Catalysis depends on aspartate 187, which acts as the Charge relay system. Cysteine 242 and cysteine 255 are joined by a disulfide. Histidine 257 serves as the catalytic Charge relay system. Disulfide bonds link cysteine 279/cysteine 290 and cysteine 293/cysteine 301. Asparagine 289 carries N-linked (GlcNAc...) asparagine glycosylation. N-linked (GlcNAc...) asparagine glycosylation occurs at asparagine 366. The cysteines at positions 436 and 455 are disulfide-linked.

This sequence belongs to the AB hydrolase superfamily. Lipase family.

The protein resides in the secreted. Its subcellular location is the cell membrane. The enzyme catalyses 1-hexadecanoyl-2-(9Z-octadecenoyl)-sn-glycero-3-phosphate + H2O = 2-(9Z-octadecenoyl)-sn-glycero-3-phosphate + hexadecanoate + H(+). Functionally, hydrolyzes specifically phosphatidic acid (PA) to produce 2-acyl lysophosphatidic acid (LPA; a potent bioactive lipid mediator) and fatty acid. Does not hydrolyze other phospholipids, like phosphatidylserine (PS), phosphatidylcholine (PC) and phosphatidylethanolamine (PE) or triacylglycerol (TG). In Xenopus laevis (African clawed frog), this protein is Lipase member H-B (liph-b).